The sequence spans 231 residues: Putative histone H1.9 (231 aa).

One can recognise an H15 domain in the interval 113 to 177; that stretch reads QKPSTSKVIL…GSAGSFTLGK (65 aa). The residue at position 135 (serine 135) is a Phosphoserine. The tract at residues 177–214 is disordered; sequence KKQASKSKLKVKRQRQQRWRSGQRPFGQHRSLLGSKQG. The span at 179 to 194 shows a compositional bias: basic residues; the sequence is QASKSKLKVKRQRQQR.

This sequence belongs to the histone H1/H5 family. In terms of tissue distribution, expressed exclusively in the testis.

The protein resides in the nucleus. It is found in the chromosome. In terms of biological role, DNA-binding protein that may be implicated in chromatin remodeling and/or transcriptional regulation during spermiogenesis, the process of spermatid maturation into spermatozoa. This is Putative histone H1.9 from Homo sapiens (Human).